We begin with the raw amino-acid sequence, 233 residues long: UPF0758 protein Rcas_0037 (233 aa).

One can recognise an MPN domain in the interval 107–229 (QIRSPTDAAQ…FVSMRERGLA (123 aa)). Zn(2+) is bound by residues histidine 178, histidine 180, and aspartate 191. The JAMM motif signature appears at 178–191 (HNHPSGDPTPSPED).

The protein belongs to the UPF0758 family.

The polypeptide is UPF0758 protein Rcas_0037 (Roseiflexus castenholzii (strain DSM 13941 / HLO8)).